Consider the following 344-residue polypeptide: Glycerol-3-phosphate dehydrogenase [NAD(P)+] (344 aa).

Residues tryptophan 18, histidine 38, and lysine 115 each contribute to the NADPH site. 3 residues coordinate sn-glycerol 3-phosphate: lysine 115, glycine 144, and threonine 146. Alanine 148 serves as a coordination point for NADPH. The sn-glycerol 3-phosphate site is built by lysine 199, aspartate 252, serine 262, arginine 263, and asparagine 264. The active-site Proton acceptor is the lysine 199. Arginine 263 contributes to the NADPH binding site. NADPH is bound by residues valine 288 and glutamate 290.

The protein belongs to the NAD-dependent glycerol-3-phosphate dehydrogenase family.

The protein localises to the cytoplasm. The catalysed reaction is sn-glycerol 3-phosphate + NAD(+) = dihydroxyacetone phosphate + NADH + H(+). The enzyme catalyses sn-glycerol 3-phosphate + NADP(+) = dihydroxyacetone phosphate + NADPH + H(+). It functions in the pathway membrane lipid metabolism; glycerophospholipid metabolism. In terms of biological role, catalyzes the reduction of the glycolytic intermediate dihydroxyacetone phosphate (DHAP) to sn-glycerol 3-phosphate (G3P), the key precursor for phospholipid synthesis. The protein is Glycerol-3-phosphate dehydrogenase [NAD(P)+] of Hydrogenovibrio crunogenus (strain DSM 25203 / XCL-2) (Thiomicrospira crunogena).